The primary structure comprises 225 residues: Heptaprenylglyceryl phosphate synthase (225 aa).

Lys6 is a sn-glycerol 1-phosphate binding site. Positions 8 and 34 each coordinate Mg(2+). Sn-glycerol 1-phosphate contacts are provided by residues 153 to 158, Gly183, and 203 to 204; these read YIEYSG and GN.

It belongs to the GGGP/HepGP synthase family. Group I subfamily. As to quaternary structure, homodimer. Requires Mg(2+) as cofactor.

It carries out the reaction sn-glycerol 1-phosphate + all-trans-heptaprenyl diphosphate = 3-heptaprenyl-sn-glycero-1-phosphate + diphosphate. The protein operates within membrane lipid metabolism; glycerophospholipid metabolism. In terms of biological role, prenyltransferase that catalyzes in vivo the transfer of the heptaprenyl moiety of heptaprenyl pyrophosphate (HepPP; 35 carbon atoms) to the C3 hydroxyl of sn-glycerol-1-phosphate (G1P), producing heptaprenylglyceryl phosphate (HepGP). This reaction is an ether-bond-formation step in the biosynthesis of archaea-type G1P-based membrane lipids found in Bacillales. The protein is Heptaprenylglyceryl phosphate synthase of Listeria welshimeri serovar 6b (strain ATCC 35897 / DSM 20650 / CCUG 15529 / CIP 8149 / NCTC 11857 / SLCC 5334 / V8).